A 498-amino-acid polypeptide reads, in one-letter code: Alpha-amylase A (498 aa).

The first 21 residues, 1 to 21, serve as a signal peptide directing secretion; it reads MMVAWWSLFLYGLQVAAPALA. The cysteines at positions 51 and 59 are disulfide-linked. Substrate contacts are provided by glutamine 56 and tryptophan 104. Asparagine 142 lines the Ca(2+) pocket. A substrate-binding site is contributed by histidine 143. A disulfide bridge links cysteine 171 with cysteine 185. Ca(2+) contacts are provided by glutamate 183 and aspartate 196. An N-linked (GlcNAc...) asparagine glycan is attached at asparagine 218. Arginine 225 is a binding site for substrate. Ca(2+) is bound by residues aspartate 227, histidine 231, and glutamate 251. Aspartate 227 functions as the Nucleophile in the catalytic mechanism. 230–231 lines the substrate pocket; the sequence is KH. Residue glutamate 251 is the Proton donor of the active site. Residue glycine 255 coordinates substrate. A disulfide bond links cysteine 261 and cysteine 304. Residues aspartate 318 and arginine 365 each coordinate substrate. Cysteine 461 and cysteine 496 form a disulfide bridge.

Belongs to the glycosyl hydrolase 13 family. It depends on Ca(2+) as a cofactor.

The enzyme catalyses Endohydrolysis of (1-&gt;4)-alpha-D-glucosidic linkages in polysaccharides containing three or more (1-&gt;4)-alpha-linked D-glucose units.. The chain is Alpha-amylase A (amyA) from Aspergillus awamori (Black koji mold).